Consider the following 123-residue polypeptide: Class I hydrophobin pri2 (123 aa).

The first 18 residues, 1–18 (MVAIKSLAILALPVMAMA), serve as a signal peptide directing secretion. 4 disulfide bridges follow: Cys-31–Cys-102, Cys-38–Cys-96, Cys-39–Cys-84, and Cys-103–Cys-116. N-linked (GlcNAc...) asparagine glycans are attached at residues Asn-33 and Asn-40.

The protein belongs to the fungal hydrophobin family. As to quaternary structure, self-assembles to form functional amyloid fibrils called rodlets. Self-assembly into fibrillar rodlets occurs spontaneously at hydrophobic:hydrophilic interfaces and the rodlets further associate laterally to form amphipathic monolayers.

It is found in the secreted. The protein localises to the cell wall. Aerial growth, conidiation, and dispersal of filamentous fungi in the environment rely upon a capability of their secreting small amphipathic proteins called hydrophobins (HPBs) with low sequence identity. Class I can self-assemble into an outermost layer of rodlet bundles on aerial cell surfaces, conferring cellular hydrophobicity that supports fungal growth, development and dispersal; whereas Class II form highly ordered films at water-air interfaces through intermolecular interactions but contribute nothing to the rodlet structure. This Cyclocybe aegerita (Black poplar mushroom) protein is Class I hydrophobin pri2.